A 389-amino-acid chain; its full sequence is MSEYLFTSESVSEGHPDKVADQISDAILDAILREDKHARVAAETLVNTGLVVLAGEITTTANVDYIKIARETIKRIGYDDSELGFDFRGCAVMACYDKQSPDIAQGVNEGEGLDLNQGAGDQGLMFGYACDETPTLMPFPIYYAHRLVQRQAELRKDGRLPWLRPDAKSQITCVYDAATGLPKRIDTVVLSTQHSPDIDHKTLSEAVIEDIVKPVLPPEMITPETKFLINPTGRFVIGGPMGDCGLTGRKIIVDTYGGAAPHGGGAFSGKDPSKVDRSAAYAGRYVAKNIVAAGLARQCQIQVSYAIGVAEPTSIAVDTFGTNKIPNEKIVELVKKHFDLRPKGIIQMLDLLRPIYGKTAAYGHFGREEPEFSWERTDKVEALRADAGL.

Residue His15 participates in ATP binding. Asp17 contributes to the Mg(2+) binding site. Position 43 (Glu43) interacts with K(+). L-methionine-binding residues include Glu56 and Gln99. A flexible loop region spans residues 99–109; sequence QSPDIAQGVNE. Residues 166–168, 234–235, Asp243, 249–250, Ala266, and Lys270 contribute to the ATP site; these read DAK, RF, and RK. Asp243 lines the L-methionine pocket. Lys274 contributes to the L-methionine binding site.

It belongs to the AdoMet synthase family. As to quaternary structure, homotetramer; dimer of dimers. Mg(2+) serves as cofactor. Requires K(+) as cofactor.

The protein localises to the cytoplasm. The enzyme catalyses L-methionine + ATP + H2O = S-adenosyl-L-methionine + phosphate + diphosphate. It functions in the pathway amino-acid biosynthesis; S-adenosyl-L-methionine biosynthesis; S-adenosyl-L-methionine from L-methionine: step 1/1. Functionally, catalyzes the formation of S-adenosylmethionine (AdoMet) from methionine and ATP. The overall synthetic reaction is composed of two sequential steps, AdoMet formation and the subsequent tripolyphosphate hydrolysis which occurs prior to release of AdoMet from the enzyme. This Chromobacterium violaceum (strain ATCC 12472 / DSM 30191 / JCM 1249 / CCUG 213 / NBRC 12614 / NCIMB 9131 / NCTC 9757 / MK) protein is S-adenosylmethionine synthase.